A 957-amino-acid chain; its full sequence is Glycine dehydrogenase (decarboxylating) 2 (957 aa).

K707 is subject to N6-(pyridoxal phosphate)lysine.

This sequence belongs to the GcvP family. The glycine cleavage system is composed of four proteins: P, T, L and H. The cofactor is pyridoxal 5'-phosphate.

It catalyses the reaction N(6)-[(R)-lipoyl]-L-lysyl-[glycine-cleavage complex H protein] + glycine + H(+) = N(6)-[(R)-S(8)-aminomethyldihydrolipoyl]-L-lysyl-[glycine-cleavage complex H protein] + CO2. The glycine cleavage system catalyzes the degradation of glycine. The P protein binds the alpha-amino group of glycine through its pyridoxal phosphate cofactor; CO(2) is released and the remaining methylamine moiety is then transferred to the lipoamide cofactor of the H protein. The polypeptide is Glycine dehydrogenase (decarboxylating) 2 (Pseudomonas fluorescens (strain Pf0-1)).